A 513-amino-acid polypeptide reads, in one-letter code: Maturase K (513 aa).

Belongs to the intron maturase 2 family. MatK subfamily.

The protein localises to the plastid. The protein resides in the chloroplast. In terms of biological role, usually encoded in the trnK tRNA gene intron. Probably assists in splicing its own and other chloroplast group II introns. This is Maturase K from Panicum capillare (Witchgrass).